The following is a 242-amino-acid chain: Leucyl/phenylalanyl-tRNA--protein transferase (242 aa).

Belongs to the L/F-transferase family.

The protein resides in the cytoplasm. It catalyses the reaction N-terminal L-lysyl-[protein] + L-leucyl-tRNA(Leu) = N-terminal L-leucyl-L-lysyl-[protein] + tRNA(Leu) + H(+). The catalysed reaction is N-terminal L-arginyl-[protein] + L-leucyl-tRNA(Leu) = N-terminal L-leucyl-L-arginyl-[protein] + tRNA(Leu) + H(+). It carries out the reaction L-phenylalanyl-tRNA(Phe) + an N-terminal L-alpha-aminoacyl-[protein] = an N-terminal L-phenylalanyl-L-alpha-aminoacyl-[protein] + tRNA(Phe). In terms of biological role, functions in the N-end rule pathway of protein degradation where it conjugates Leu, Phe and, less efficiently, Met from aminoacyl-tRNAs to the N-termini of proteins containing an N-terminal arginine or lysine. In Alcanivorax borkumensis (strain ATCC 700651 / DSM 11573 / NCIMB 13689 / SK2), this protein is Leucyl/phenylalanyl-tRNA--protein transferase.